A 739-amino-acid chain; its full sequence is Vascular cell adhesion protein 1 (739 aa).

Positions M1–A24 are cleaved as a signal peptide. Ig-like C2-type domains are found at residues S25–E105, Q109–E212, P223–Q309, P312–D399, E408–Y506, P511–I595, and P600–D684. Residues S25–E698 lie on the Extracellular side of the membrane. Intrachain disulfides connect C47–C95, C52–C99, C137–C195, C246–C291, and C335–C383. N-linked (GlcNAc...) asparagine glycosylation is found at N76 and N77. N273 carries N-linked (GlcNAc...) asparagine glycosylation. Residue N531 is glycosylated (N-linked (GlcNAc...) asparagine). Residues C534 and C579 are joined by a disulfide bond. A helical transmembrane segment spans residues L699–A720. At R721 to V739 the chain is on the cytoplasmic side.

Post-translationally, cleaved by the metalloproteinase ADAM17 to generate the soluble form. In terms of processing, sialoglycoprotein. Ubiquitinated by TRIM65 via 'Lys-48'-linked ubiquitination; leading to proteasomal degradation.

It localises to the cell membrane. The protein resides in the secreted. In terms of biological role, cell adhesion glycoprotein predominantly expressed on the surface of endothelial cells that plays an important role in immune surveillance and inflammation. Acts as a major regulator of leukocyte adhesion to the endothelium through interaction with different types of integrins. During inflammatory responses, binds ligands on the surface of activated endothelial cells to initiate the activation of calcium channels and the plasma membrane-associated small GTPase RAC1 leading to leukocyte transendothelial migration. Also serves as a quality-control checkpoint for entry into bone marrow by providing a 'don't-eat-me' stamping in the context of major histocompatibility complex (MHC) class-I presentation. This Canis lupus familiaris (Dog) protein is Vascular cell adhesion protein 1 (VCAM1).